A 566-amino-acid polypeptide reads, in one-letter code: Beta-1,2-xylosyltransferease XAX1 (566 aa).

Positions 1-25 (MTSTAYSRPSKLPGGGNGSDRRLPP) are disordered. The Cytoplasmic portion of the chain corresponds to 1-43 (MTSTAYSRPSKLPGGGNGSDRRLPPRLMRGLTTKIEPKKLGVG). Residues 44–64 (LLAGCCLALLTYVSLAKLFAI) traverse the membrane as a helical; Signal-anchor for type II membrane protein segment. Residues 65–566 (YSPVFASTAN…LLQALDRLQQ (502 aa)) lie on the Lumenal side of the membrane. The N-linked (GlcNAc...) asparagine glycan is linked to Asn-74. Residues 78–180 (LMQNSPPSSP…AAGGDTKIKC (103 aa)) are disordered. Positions 84 to 94 (PSSPETGPIPP) are enriched in pro residues. N-linked (GlcNAc...) asparagine glycans are attached at residues Asn-104, Asn-368, Asn-429, Asn-515, and Asn-549.

The protein belongs to the glycosyltransferase 61 family. In terms of tissue distribution, highly expressed in young panicles.

The protein localises to the golgi apparatus membrane. The protein operates within glycan metabolism. In terms of biological role, glycosyltransferase involved in the xylosylation of xylan, the major hemicellulose (non-cellulosic component) of primary and secondary walls of angiosperms. Possesses beta-1,2-xylosyltransferase activity, transferring xylose from UDP-xylose to the xylan backbone. In Oryza sativa subsp. japonica (Rice), this protein is Beta-1,2-xylosyltransferease XAX1.